The primary structure comprises 309 residues: Potassium channel subfamily K member 16 (309 aa).

The Cytoplasmic portion of the chain corresponds to 1 to 13 (MPSAGLCSCWGGR). Residues 14–34 (VLPLLLAYVCYLLLGATIFQL) form a helical membrane-spanning segment. Residues 98-116 (SFFFAGTVVTTIGYGNLAP) constitute an intramembrane region (pore-forming). K(+) contacts are provided by threonine 108, isoleucine 109, glycine 110, and tyrosine 111. The segment at 108–113 (TIGYGN) is selectivity filter 1. The chain crosses the membrane as a helical span at residues 120–140 (AGQVFCVFYALLGIPLNVIFL). Topologically, residues 141 to 165 (NHLGTGLRAHLAAIERWEDRPRRSQ) are cytoplasmic. Residues 166–186 (VLQVLGLALFLTLGTLVILIF) form a helical membrane-spanning segment. Residues 202–221 (GFYFAFITLSTIGFGDYVVG) constitute an intramembrane region (pore-forming). 4 residues coordinate K(+): threonine 212, isoleucine 213, glycine 214, and phenylalanine 215. Residues 212 to 217 (TIGFGD) are selectivity filter 2. Residues 238 to 258 (IWILLGLAWLALILPLGPLLL) form a helical membrane-spanning segment. Topologically, residues 259–309 (HRCCQLWLLSLRQGCGAKAAPGRRPRRGSTAARGVQVTPQDFPISKKGLGS) are cytoplasmic.

Belongs to the two pore domain potassium channel (TC 1.A.1.8) family. In terms of assembly, homodimer; disulfide-linked. Heterodimer with KCNK17 and KCNK5. Highly expressed in pancreas, in both endocrine (alpha, beta, gamma, delta, and epsilon) and exocrine (acinar and ductal) cells. Expressed in pacreatic beta-cells (at protein level). Expressed in pacreatic delta-cells (at protein level). Not detectable in the other tissues tested.

The protein resides in the endoplasmic reticulum membrane. Its subcellular location is the cell membrane. It localises to the mitochondrion inner membrane. It carries out the reaction K(+)(in) = K(+)(out). It catalyses the reaction Rb(+)(in) = Rb(+)(out). The catalysed reaction is Cs(+)(in) = Cs(+)(out). With respect to regulation, the channel conductance is stimulated by extracellular alkaline pH. Inhibited by Ba(2+) ions, quinine, quinidine, chloroform and halothane. K(+) channel that conducts voltage-dependent outward rectifying currents upon membrane depolarization. Voltage sensing is coupled to K(+) electrochemical gradient in an 'ion flux gating' mode where outward but not inward ion flow opens the gate. Homo- and heterodimerizes to form functional channels with distinct regulatory and gating properties. In pancreatic islets, conducts K(+) countercurrents for Ca(2+) release from the endoplasmic reticulum (ER) and regulates the frequency and duration of cytosolic Ca(2+) oscillations coupled to secretion of pancreatic hormones. In pancreatic beta cells, drives ER Ca(2+) efflux, which in turn activates Ca(2+)-dependent plasma membrane K(+) slow currents and cytosolic Ca(2+) influx, overall contributing to synchronous cytosolic Ca(2+) oscillations. Limits glucose-induced cytosolic Ca(2+) oscillations coupled to second-phase INS secretion. Contributes to beta cell adaptation to acute inflammation by maintaining normal cytosolic Ca(2+) levels and INS secretion. May regulate beta cell mitochondrial Ca(2+) levels either indirectly via ER Ca(2+) efflux or directly by hyperpolarizing the mitochondrial membrane potential. Limits mitochondrial Ca(2+) oscillations and ATP production involved in glucose homeostasis upon metabolic stress. In pancreatic delta cells, limits Ca(2+)-induced Ca(2+)-release involved in somatostatin secretion and modulates islet paracrine signaling involved in glucagon secretion. Permeable to other monovalent cations such as Rb(+) and Cs(+). This chain is Potassium channel subfamily K member 16, found in Homo sapiens (Human).